Reading from the N-terminus, the 649-residue chain is MSKFNLYSDYKPLGDQPKAIKSLVEHYKDGIKEQTLEGVTGSGKTFTMANVIEQLDKPTLVMSHNKTLAAQLYEEFKEFFPDNAVEYFVSYYDYYQPEAYVAQTDTFIDKESAINEEIDRLRHSATQSLLTRDDVIVVSSVSCIYGIGSPEDYAQFTLTLQTQQEISREDILKELVKMQYSRNDIEFIRGQFRVRGDVIEIFPINANYALRIELWGDEIDVIYKIDALKGDIIEELQKVIIFPAKHFVIAKEKQETAIANIKKELKERVDTFKATGKYVEAQRIEQRTNFDMEMLQEIGYCSGIENYSMHMNGRKWGETPYSLLRYFPDDYLTIIDESHVTVPQIRGMYEGDRARKENLIQYGFRLPSAKENRPLRFDEFMRAQNQVLYVSATPAAFELGRSKNKVEQIIRPTGLVDPEPIVRPIKNQVDDLLGEIRKCVDNNQRVLVTSLTKKMAEDLTDYYIKMNVKARYLHSEISTLERTEIIDELRRGDFDCLVGVNLLREGLDLPEVALVAILDADKEGFLRSQTSLIQTIGRAARNVNGRVILYADNITDSVRNAVNITKHRRKIQIAYNNDHNITPRSVVRKLKDKKIEEKVDDIQEIDNITTDEIDEIIKELEKEMKQAAKDLNFEKAAKLRDRIMELKEE.

Residues 25-178 (EHYKDGIKEQ…EDILKELVKM (154 aa)) form the Helicase ATP-binding domain. Position 38-45 (38-45 (GVTGSGKT)) interacts with ATP. Residues 91–114 (YYDYYQPEAYVAQTDTFIDKESAI) carry the Beta-hairpin motif. Residues 428–594 (QVDDLLGEIR…SVVRKLKDKK (167 aa)) enclose the Helicase C-terminal domain. The 36-residue stretch at 614–649 (DEIIKELEKEMKQAAKDLNFEKAAKLRDRIMELKEE) folds into the UVR domain.

The protein belongs to the UvrB family. In terms of assembly, forms a heterotetramer with UvrA during the search for lesions. Interacts with UvrC in an incision complex.

It is found in the cytoplasm. The UvrABC repair system catalyzes the recognition and processing of DNA lesions. A damage recognition complex composed of 2 UvrA and 2 UvrB subunits scans DNA for abnormalities. Upon binding of the UvrA(2)B(2) complex to a putative damaged site, the DNA wraps around one UvrB monomer. DNA wrap is dependent on ATP binding by UvrB and probably causes local melting of the DNA helix, facilitating insertion of UvrB beta-hairpin between the DNA strands. Then UvrB probes one DNA strand for the presence of a lesion. If a lesion is found the UvrA subunits dissociate and the UvrB-DNA preincision complex is formed. This complex is subsequently bound by UvrC and the second UvrB is released. If no lesion is found, the DNA wraps around the other UvrB subunit that will check the other stand for damage. The protein is UvrABC system protein B of Methanosphaera stadtmanae (strain ATCC 43021 / DSM 3091 / JCM 11832 / MCB-3).